Here is a 301-residue protein sequence, read N- to C-terminus: Homoserine O-acetyltransferase (301 aa).

Catalysis depends on Cys-142, which acts as the Acyl-thioester intermediate. Residues Lys-163 and Ser-192 each coordinate substrate. His-235 (proton acceptor) is an active-site residue. Residue Glu-237 is part of the active site. Substrate is bound at residue Arg-249.

Belongs to the MetA family.

It is found in the cytoplasm. It carries out the reaction L-homoserine + acetyl-CoA = O-acetyl-L-homoserine + CoA. It functions in the pathway amino-acid biosynthesis; L-methionine biosynthesis via de novo pathway; O-acetyl-L-homoserine from L-homoserine: step 1/1. Transfers an acetyl group from acetyl-CoA to L-homoserine, forming acetyl-L-homoserine. The sequence is that of Homoserine O-acetyltransferase from Bacillus anthracis (strain A0248).